Consider the following 488-residue polypeptide: Ribulose bisphosphate carboxylase large chain (488 aa).

Residues N127 and T177 each coordinate substrate. Catalysis depends on K179, which acts as the Proton acceptor. K181 provides a ligand contact to substrate. K205, D207, and E208 together coordinate Mg(2+). K205 is subject to N6-carboxylysine. H297 acts as the Proton acceptor in catalysis. Substrate is bound by residues R298, H330, and S382.

The protein belongs to the RuBisCO large chain family. Type I subfamily. In terms of assembly, heterohexadecamer of 8 large chains and 8 small chains. It depends on Mg(2+) as a cofactor.

It localises to the plastid. It is found in the chloroplast. The enzyme catalyses 2 (2R)-3-phosphoglycerate + 2 H(+) = D-ribulose 1,5-bisphosphate + CO2 + H2O. It carries out the reaction D-ribulose 1,5-bisphosphate + O2 = 2-phosphoglycolate + (2R)-3-phosphoglycerate + 2 H(+). Functionally, ruBisCO catalyzes two reactions: the carboxylation of D-ribulose 1,5-bisphosphate, the primary event in carbon dioxide fixation, as well as the oxidative fragmentation of the pentose substrate in the photorespiration process. Both reactions occur simultaneously and in competition at the same active site. This is Ribulose bisphosphate carboxylase large chain from Pylaiella littoralis (Seaweed).